The primary structure comprises 323 residues: Putative divalent cation/proton antiporter TMEM165 (323 aa).

An N-terminal signal peptide occupies residues 1–33 (MAAAARGSGRAPTRRLLVLLLLQLLWAPAGVRA). The Lumenal portion of the chain corresponds to 34 to 89 (GPEEDLSHRNQEPPAPAQQLQPQPAAVQGLEPARAEKGLTPVAPVHTNKEDAAAQT). Residues 35–44 (PEEDLSHRNQ) are compositionally biased toward basic and acidic residues. The interval 35-60 (PEEDLSHRNQEPPAPAQQLQPQPAAV) is disordered. A compositionally biased stretch (low complexity) spans 50–59 (AQQLQPQPAA). Residues 90 to 110 (NLGFIHAFVAAISVIIVSELG) form a helical membrane-spanning segment. The Cytoplasmic portion of the chain corresponds to 111–126 (DKTFFIAAIMAMRYNR). The helical transmembrane segment at 127-147 (LTVLAGAMLALALMTCLSVLF) threads the bilayer. Residues 148–151 (GYAT) are Lumenal-facing. Residues 152–172 (TVIPRVYTYYVSTALFAIFGI) traverse the membrane as a helical segment. Topologically, residues 173-227 (RMLREGLKMSPDEGQEELEEVQAELKKKDEEFQRTKLLNGPDVETGTSTAIPQKK) are cytoplasmic. Positions 184–211 (DEGQEELEEVQAELKKKDEEFQRTKLLN) form a coiled coil. A helical transmembrane segment spans residues 228 to 248 (WLHFISPIFVQALTLTFLAEW). Residues 249–266 (GDRSQLTTIVLAAREDPY) are Lumenal-facing. Residues 267–287 (GVAVGGTVGHCLCTGLAVIGG) traverse the membrane as a helical segment. Residues 288–298 (RMIAQKISVRT) lie on the Cytoplasmic side of the membrane. The chain crosses the membrane as a helical span at residues 299–319 (VTIIGGIVFLAFAFSALFISP). Topologically, residues 320–323 (ESGF) are lumenal.

This sequence belongs to the GDT1 family. In terms of tissue distribution, expressed in mammary epithelial cells (at protein level).

The protein resides in the golgi apparatus membrane. The enzyme catalyses Ca(2+)(in) + n H(+)(out) = Ca(2+)(out) + n H(+)(in). It catalyses the reaction Mn(2+)(in) + n H(+)(out) = Mn(2+)(out) + n H(+)(in). Its function is as follows. Putative divalent cation:proton antiporter that exchanges calcium or manganese ions for protons across the Golgi membrane. Mediates the reversible transport of calcium or manganese to the Golgi lumen driven by the proton gradient and possibly the membrane potential generated by V-ATPase. Provides calcium or manganese cofactors to resident Golgi enzymes and contributes to the maintenance of an acidic luminal Golgi pH required for proper functioning of the secretory pathway. Promotes Ca(2+) storage within the Golgi lumen of the mammary epithelial cells to be then secreted into milk. The transport mechanism and stoichiometry remains to be elucidated. This Mus musculus (Mouse) protein is Putative divalent cation/proton antiporter TMEM165.